The chain runs to 685 residues: Small ribosomal subunit protein mS39 (685 aa).

Residues 1-10 (MAAAAVAARR) constitute a mitochondrion transit peptide. Lys-127 carries the post-translational modification N6-acetyllysine. PPR repeat units lie at residues 150–184 (IEDVSEAALEERIRLRKVRASVDMFDQLLQAGTTV), 185–220 (SLETTNSLLDLLCYYGDQEPPADYPFQQTEHLENLE), 254–288 (NARSYCTMIRGMVKHRAYAQALNVYTELLNNRLSA), 289–329 (DVYT…KVKP), 330–366 (NLQTFNTILKGLRKCYSLGRIPALQILREMKHIGIEP), 367–407 (SLAT…TFSP), 412–446 (DGRFFQLAMSVCSSLRDLELAYQVHRLLNTGDNRK), 454–488 (RKVYYSKFFSLICSLEQIDVTLKWYKDLIPSVFLP), 489–523 (HYQIFIGLLQALDVANRLELVPQIWKDSKEYSHTF), and 572–606 (PANPLQYIAVLFLRGGRSQEAWKMLELFKKHKKIP). The interval 663–685 (LGNLTELNSSDGESSSDSDSDDK) is disordered. Residues 676–685 (SSSDSDSDDK) are compositionally biased toward acidic residues.

Belongs to the mitochondrion-specific ribosomal protein mS39 family. In terms of assembly, component of the mitochondrial ribosome small subunit (28S) which comprises a 12S rRNA and about 30 distinct proteins. Associated with the 12S mitochondrial rRNA (12S mt-rRNA).

The protein resides in the mitochondrion. Its function is as follows. Mitochondrial RNA-binding protein that has a role in mitochondrial translation. This chain is Small ribosomal subunit protein mS39 (Ptcd3), found in Mus musculus (Mouse).